The sequence spans 313 residues: Ribosomal RNA small subunit methyltransferase H (313 aa).

Residues 35 to 37 (GGH), Asp55, Phe79, Asp101, and Gln108 contribute to the S-adenosyl-L-methionine site.

The protein belongs to the methyltransferase superfamily. RsmH family.

The protein localises to the cytoplasm. The catalysed reaction is cytidine(1402) in 16S rRNA + S-adenosyl-L-methionine = N(4)-methylcytidine(1402) in 16S rRNA + S-adenosyl-L-homocysteine + H(+). Its function is as follows. Specifically methylates the N4 position of cytidine in position 1402 (C1402) of 16S rRNA. The protein is Ribosomal RNA small subunit methyltransferase H of Shigella sonnei (strain Ss046).